Here is a 388-residue protein sequence, read N- to C-terminus: 2-methylene-furan-3-one reductase (388 aa).

The transit peptide at 1-60 (MEALLSSTTLQLKPLHPPSSFSSLHSPFSSISVLRVKGSKKAETFIQRSNFSTVLPLRVS) directs the protein to the chloroplast. NADP(+) is bound by residues K125, 240–241 (GV), 263–266 (STGK), Y281, 330–332 (FVV), and 377–378 (RA). A substrate-binding site is contributed by K125.

This sequence belongs to the zinc-containing alcohol dehydrogenase family. Quinone oxidoreductase subfamily. In terms of assembly, monomer.

The protein resides in the plastid. It is found in the chloroplast. The enzyme catalyses 4-hydroxy-2,5-dimethyl-furan-3(2H)-one + NADP(+) = 4-hydroxy-5-methyl-2-methylenefuran-3(2H)-one + NADPH + H(+). Functionally, enone oxidoreductase involved in the biosynthesis of 4-hydroxy-2,5-dimethyl-3(2H)-furanone (HDMF or furaneol). Can use both NADH and NADPH as the electron donor. This is 2-methylene-furan-3-one reductase (EO) from Solanum lycopersicum (Tomato).